The primary structure comprises 429 residues: Gamma-glutamyl phosphate reductase (429 aa).

It belongs to the gamma-glutamyl phosphate reductase family.

It localises to the cytoplasm. The catalysed reaction is L-glutamate 5-semialdehyde + phosphate + NADP(+) = L-glutamyl 5-phosphate + NADPH + H(+). Its pathway is amino-acid biosynthesis; L-proline biosynthesis; L-glutamate 5-semialdehyde from L-glutamate: step 2/2. Catalyzes the NADPH-dependent reduction of L-glutamate 5-phosphate into L-glutamate 5-semialdehyde and phosphate. The product spontaneously undergoes cyclization to form 1-pyrroline-5-carboxylate. This is Gamma-glutamyl phosphate reductase from Sphingopyxis alaskensis (strain DSM 13593 / LMG 18877 / RB2256) (Sphingomonas alaskensis).